The primary structure comprises 338 residues: Ketol-acid reductoisomerase (NADP(+)) (338 aa).

Positions 1–181 (MKVFYDKDCD…GGGKAGIIET (181 aa)) constitute a KARI N-terminal Rossmann domain. Residues 24–27 (YGSQ), Arg-47, and Ser-52 contribute to the NADP(+) site. The active site involves His-107. An NADP(+)-binding site is contributed by Gly-133. One can recognise a KARI C-terminal knotted domain in the interval 182–327 (TFREETETDL…EKLRAMMPWI (146 aa)). 4 residues coordinate Mg(2+): Asp-190, Glu-194, Glu-226, and Glu-230. Ser-251 is a substrate binding site.

Belongs to the ketol-acid reductoisomerase family. Mg(2+) is required as a cofactor.

It catalyses the reaction (2R)-2,3-dihydroxy-3-methylbutanoate + NADP(+) = (2S)-2-acetolactate + NADPH + H(+). The enzyme catalyses (2R,3R)-2,3-dihydroxy-3-methylpentanoate + NADP(+) = (S)-2-ethyl-2-hydroxy-3-oxobutanoate + NADPH + H(+). Its pathway is amino-acid biosynthesis; L-isoleucine biosynthesis; L-isoleucine from 2-oxobutanoate: step 2/4. The protein operates within amino-acid biosynthesis; L-valine biosynthesis; L-valine from pyruvate: step 2/4. In terms of biological role, involved in the biosynthesis of branched-chain amino acids (BCAA). Catalyzes an alkyl-migration followed by a ketol-acid reduction of (S)-2-acetolactate (S2AL) to yield (R)-2,3-dihydroxy-isovalerate. In the isomerase reaction, S2AL is rearranged via a Mg-dependent methyl migration to produce 3-hydroxy-3-methyl-2-ketobutyrate (HMKB). In the reductase reaction, this 2-ketoacid undergoes a metal-dependent reduction by NADPH to yield (R)-2,3-dihydroxy-isovalerate. The chain is Ketol-acid reductoisomerase (NADP(+)) from Albidiferax ferrireducens (strain ATCC BAA-621 / DSM 15236 / T118) (Rhodoferax ferrireducens).